A 400-amino-acid chain; its full sequence is Nicotinate phosphoribosyltransferase (400 aa).

The residue at position 220 (His220) is a Phosphohistidine; by autocatalysis.

The protein belongs to the NAPRTase family. In terms of processing, transiently phosphorylated on a His residue during the reaction cycle. Phosphorylation strongly increases the affinity for substrates and increases the rate of nicotinate D-ribonucleotide production. Dephosphorylation regenerates the low-affinity form of the enzyme, leading to product release.

It catalyses the reaction nicotinate + 5-phospho-alpha-D-ribose 1-diphosphate + ATP + H2O = nicotinate beta-D-ribonucleotide + ADP + phosphate + diphosphate. Its pathway is cofactor biosynthesis; NAD(+) biosynthesis; nicotinate D-ribonucleotide from nicotinate: step 1/1. Catalyzes the synthesis of beta-nicotinate D-ribonucleotide from nicotinate and 5-phospho-D-ribose 1-phosphate at the expense of ATP. This chain is Nicotinate phosphoribosyltransferase, found in Salmonella newport (strain SL254).